Here is a 533-residue protein sequence, read N- to C-terminus: MERLSGKVILVWGFKRALLAILAGAIGVLALPPFGFFAAMFVSFTLLVWLLDGAAAGPDSGFLGRLWPAFTTGWLFGFGYFVAGLWWLGHALLIDADQFAWALPLAILGLPAFLAIFYGVAAVLARLLWSDGMGRIAALAFGFGLLEWLRSFLFTGFPWNAIGYGAMPIPLMMQSAHVIGVLGVTVLAVFVFAAPALLGTRQGRVPGIGLAVLIAAAHFAYGYYALNLPALPPAAGKAAPVVRIVQPAIDQEAKMDTAADRNAIFDKHLSLSVQPPVNGGKRPDIIVWPETAIPFILTDNQDALTRIADQLDDDQILITGAVRVEDMGPGVEPRYYNSVYVIDGRGQIIGASDKTHLVPFGEYVPFENILGYLGIENVVELPGGFSAAASRQLLTLPDGIKLYPLICYEIIFPNEMTPEIRQADAILNVTNDAWFGDTPGPYQHFLQARVRAVEQGLPLIRSANTGVSAYVDAHGRLISGIDFNEQGFVDSTLSGATVSRIDDSVRKTYFWLIIGIVGMIAVISRMGFISRVN.

Helical transmembrane passes span 17–37 (ALLA…FGFF), 74–94 (WLFG…ALLI), 105–125 (LAIL…AVLA), 127–147 (LLWS…GLLE), 178–198 (VIGV…PALL), and 205–225 (VPGI…GYYA). A CN hydrolase domain is found at 245–495 (VQPAIDQEAK…QGFVDSTLSG (251 aa)). Glu-290 acts as the Proton acceptor in catalysis. Lys-354 is an active-site residue. Cys-407 (nucleophile) is an active-site residue. The chain crosses the membrane as a helical span at residues 509–529 (YFWLIIGIVGMIAVISRMGFI).

It belongs to the CN hydrolase family. Apolipoprotein N-acyltransferase subfamily.

Its subcellular location is the cell inner membrane. The enzyme catalyses N-terminal S-1,2-diacyl-sn-glyceryl-L-cysteinyl-[lipoprotein] + a glycerophospholipid = N-acyl-S-1,2-diacyl-sn-glyceryl-L-cysteinyl-[lipoprotein] + a 2-acyl-sn-glycero-3-phospholipid + H(+). The protein operates within protein modification; lipoprotein biosynthesis (N-acyl transfer). Functionally, catalyzes the phospholipid dependent N-acylation of the N-terminal cysteine of apolipoprotein, the last step in lipoprotein maturation. This chain is Apolipoprotein N-acyltransferase, found in Rhizobium rhizogenes (strain K84 / ATCC BAA-868) (Agrobacterium radiobacter).